A 382-amino-acid polypeptide reads, in one-letter code: tRNA-specific 2-thiouridylase MnmA (382 aa).

Residues 18–25 and Leu-44 contribute to the ATP site; that span reads AMSGGVDS. The Nucleophile role is filled by Cys-112. Cysteines 112 and 209 form a disulfide. An ATP-binding site is contributed by Gly-136. Residues 159 to 161 are interaction with tRNA; sequence RDQ. The active-site Cysteine persulfide intermediate is Cys-209.

The protein belongs to the MnmA/TRMU family.

It localises to the cytoplasm. It catalyses the reaction S-sulfanyl-L-cysteinyl-[protein] + uridine(34) in tRNA + AH2 + ATP = 2-thiouridine(34) in tRNA + L-cysteinyl-[protein] + A + AMP + diphosphate + H(+). Functionally, catalyzes the 2-thiolation of uridine at the wobble position (U34) of tRNA, leading to the formation of s(2)U34. This Methylobacterium sp. (strain 4-46) protein is tRNA-specific 2-thiouridylase MnmA.